The chain runs to 329 residues: Probable nicotianamine synthase 7 (329 aa).

It belongs to the nicotianamine synthase (NAS)-like family.

It catalyses the reaction 3 S-adenosyl-L-methionine = nicotianamine + 3 S-methyl-5'-thioadenosine + 3 H(+). In terms of biological role, synthesizes nicotianamine, a polyamine that is the first intermediate in the synthesis of the phytosiderophores of the mugineic acid type found in gramineae which serves as a sensor for the physiological iron status within the plant, and/or might be involved in the transport of iron. The protein is Probable nicotianamine synthase 7 (NAS7) of Hordeum vulgare (Barley).